The following is a 295-amino-acid chain: 4-hydroxy-tetrahydrodipicolinate synthase (295 aa).

A pyruvate-binding site is contributed by threonine 48. Tyrosine 135 functions as the Proton donor/acceptor in the catalytic mechanism. Residue lysine 163 is the Schiff-base intermediate with substrate of the active site. Valine 204 is a pyruvate binding site.

This sequence belongs to the DapA family. As to quaternary structure, homotetramer; dimer of dimers.

Its subcellular location is the cytoplasm. It carries out the reaction L-aspartate 4-semialdehyde + pyruvate = (2S,4S)-4-hydroxy-2,3,4,5-tetrahydrodipicolinate + H2O + H(+). It functions in the pathway amino-acid biosynthesis; L-lysine biosynthesis via DAP pathway; (S)-tetrahydrodipicolinate from L-aspartate: step 3/4. Catalyzes the condensation of (S)-aspartate-beta-semialdehyde [(S)-ASA] and pyruvate to 4-hydroxy-tetrahydrodipicolinate (HTPA). The protein is 4-hydroxy-tetrahydrodipicolinate synthase of Francisella tularensis subsp. novicida (strain U112).